A 724-amino-acid chain; its full sequence is MTNRWDPGVTRALAEARHGDAFAVLGAHPSTNGRLLRTYHPGAEHVTAVLADGREVPLEAGPEPGLFAGELPAEGRYRLRIGWPGGTQDTADPYAFGPLLSDFDLHLISEGHHLQLADALGANAVEVDGVRGTRFAVWAPNASRVAVVGDFNSWDARRHPMRLRHQAGVWELFVPDVGPGAHYKYQLRGPHGHELPAKADPVARRAELAPGTASIVADPTPHQWSDDGWMATRARRQAHDAPMSIYEIHAGSWLREEGLDLDWDGLADRLIPYVADMGFTHVELMPVTEHPFGGSWGYQPLGLFAPTARFGSPDGFARFVDRCHREGIGVIVDWVPAHFPTDAHGLAHFDGTALYEHADPREGFHRDWNTLIYNHGRREVSGFLIASALEFLQRYHVDGLRVDAVASMLYRDYSRNAGEWVPNIHGGRENYETIAFLRRLNEVVREHAPGAVTIAEESTAWPGVTADVSHGGLGFHYKWNMGWMHDTLHYIGLDPIYRRYHHGELTFSMVYAYSERFVLPISHDEVVHGKGSLLGRMPGDDWQRFANLRAYLGFMFTHPGRKLLFMGCEFGQPTEWNHDAGLPWHLLDDARHRGVQTLVRDLNHLYAQYPALHAHDDDPSGFAWLVGDDAANSVVAFLRKGKRGDAPVLVVINYTPVVQQGYRLGVPQGGLWREVFNSDAGIYGGANLGNGGAVTAEPQSMHGHAQSLPLLLPPLGVIVLAPQG.

Catalysis depends on Asp403, which acts as the Nucleophile. Glu456 acts as the Proton donor in catalysis.

Belongs to the glycosyl hydrolase 13 family. GlgB subfamily. Monomer.

It catalyses the reaction Transfers a segment of a (1-&gt;4)-alpha-D-glucan chain to a primary hydroxy group in a similar glucan chain.. Its pathway is glycan biosynthesis; glycogen biosynthesis. Its function is as follows. Catalyzes the formation of the alpha-1,6-glucosidic linkages in glycogen by scission of a 1,4-alpha-linked oligosaccharide from growing alpha-1,4-glucan chains and the subsequent attachment of the oligosaccharide to the alpha-1,6 position. This Xanthomonas campestris pv. campestris (strain 8004) protein is 1,4-alpha-glucan branching enzyme GlgB 1.